A 495-amino-acid chain; its full sequence is ATP synthase subunit alpha, chloroplastic (495 aa).

170–177 (GDRQTGKT) lines the ATP pocket.

This sequence belongs to the ATPase alpha/beta chains family. As to quaternary structure, F-type ATPases have 2 components, CF(1) - the catalytic core - and CF(0) - the membrane proton channel. CF(1) has five subunits: alpha(3), beta(3), gamma(1), delta(1), epsilon(1). CF(0) has four main subunits: a, b, b' and c.

It localises to the plastid. It is found in the chloroplast thylakoid membrane. It carries out the reaction ATP + H2O + 4 H(+)(in) = ADP + phosphate + 5 H(+)(out). In terms of biological role, produces ATP from ADP in the presence of a proton gradient across the membrane. The alpha chain is a regulatory subunit. This chain is ATP synthase subunit alpha, chloroplastic, found in Cyanidioschyzon merolae (strain NIES-3377 / 10D) (Unicellular red alga).